Reading from the N-terminus, the 301-residue chain is Probable alpha-L-glutamate ligase (301 aa).

Positions 104–287 (HQLLAAQGID…VAIKIVHHVE (184 aa)) constitute an ATP-grasp domain. Residues K141, 178–179 (EF), D187, and 211–213 (RSN) contribute to the ATP site. Residues D248, E260, and N262 each coordinate Mg(2+). 3 residues coordinate Mn(2+): D248, E260, and N262.

The protein belongs to the RimK family. The cofactor is Mg(2+). It depends on Mn(2+) as a cofactor.

In Xylella fastidiosa (strain M12), this protein is Probable alpha-L-glutamate ligase.